The chain runs to 27 residues: Delta-actitoxin-Avd2a (27 aa).

3 cysteine pairs are disulfide-bonded: Cys-3-Cys-17, Cys-4-Cys-11, and Cys-6-Cys-22.

This sequence belongs to the sea anemone short toxin (type III) family.

It localises to the secreted. Its subcellular location is the nematocyst. Its function is as follows. Specific arthropod (crab and insect) toxin that inhibits inactivation of voltage-gated sodium channels. It competes well with the site-3 toxin LqhalphaIT (from the scorpion L.quinquestriatus (AC P17728)) on binding to cockroach neuronal membranes (Ki=21.4 nM), and inhibits the inactivation of D.melanogaster channel (DmNav1), but not that of mammalian Navs expressed in Xenopus oocytes. Its activity is synergically enhanced by ligands of receptor site-4 (Bj-xtrIT (AC P56637)). Its ability to inhibit the channel mutant DmNav1[D1701R] only decreases 5-fold, whereas the inhibition activity is completely lost by LqhalphaIT and Av2 when tested on DmNav1[D1701R]. The protein is Delta-actitoxin-Avd2a of Anemonia sulcata (Mediterranean snakelocks sea anemone).